A 549-amino-acid polypeptide reads, in one-letter code: uncharacterized protein (549 aa).

Residues M1–A19 form the signal peptide.

This is an uncharacterized protein from Escherichia coli (strain K12).